A 576-amino-acid chain; its full sequence is Sulfite reductase [NADPH] hemoprotein beta-component (576 aa).

Residues Cys435, Cys441, Cys480, and Cys484 each contribute to the [4Fe-4S] cluster site. Cys484 contacts siroheme.

The protein belongs to the nitrite and sulfite reductase 4Fe-4S domain family. In terms of assembly, alpha(8)-beta(8). The alpha component is a flavoprotein, the beta component is a hemoprotein. Requires siroheme as cofactor. The cofactor is [4Fe-4S] cluster.

It catalyses the reaction hydrogen sulfide + 3 NADP(+) + 3 H2O = sulfite + 3 NADPH + 4 H(+). The protein operates within sulfur metabolism; hydrogen sulfide biosynthesis; hydrogen sulfide from sulfite (NADPH route): step 1/1. In terms of biological role, component of the sulfite reductase complex that catalyzes the 6-electron reduction of sulfite to sulfide. This is one of several activities required for the biosynthesis of L-cysteine from sulfate. The polypeptide is Sulfite reductase [NADPH] hemoprotein beta-component (Yersinia pseudotuberculosis serotype O:1b (strain IP 31758)).